Reading from the N-terminus, the 943-residue chain is Translation initiation factor IF-2 (943 aa).

Residues 30–357 (SVKSHSSSVE…KPVTERKFHE (328 aa)) are disordered. Composition is skewed to basic and acidic residues over residues 69–82 (PKEE…DKAS), 112–137 (FKAE…DNRN), 145–155 (QGKRHNNDRRN), 163–196 (DHNK…RDNA), and 224–253 (RQSE…EKQQ). The span at 254–266 (VKVAVQKAAAETK) shows a compositional bias: low complexity. Basic and acidic residues predominate over residues 296–309 (KSRDNRRVNEDGPK). The span at 313-332 (NNKWNNQNQVRNQRNSNWNK) shows a compositional bias: low complexity. The tr-type G domain maps to 445–614 (ERAPVVTIMG…LLVAEVEELK (170 aa)). A G1 region spans residues 454–461 (GHVDHGKT). 454-461 (GHVDHGKT) is a binding site for GTP. Residues 479-483 (GITQH) form a G2 region. Residues 500–503 (DTPG) are G3. GTP contacts are provided by residues 500–504 (DTPGH) and 554–557 (NKID). The G4 stretch occupies residues 554–557 (NKID). The interval 590 to 592 (SAK) is G5.

It belongs to the TRAFAC class translation factor GTPase superfamily. Classic translation factor GTPase family. IF-2 subfamily.

The protein resides in the cytoplasm. One of the essential components for the initiation of protein synthesis. Protects formylmethionyl-tRNA from spontaneous hydrolysis and promotes its binding to the 30S ribosomal subunits. Also involved in the hydrolysis of GTP during the formation of the 70S ribosomal complex. The chain is Translation initiation factor IF-2 from Streptococcus thermophilus (strain ATCC BAA-250 / LMG 18311).